Here is a 316-residue protein sequence, read N- to C-terminus: Pantothenate kinase (316 aa).

95–102 (GSVAVGKS) lines the ATP pocket.

This sequence belongs to the prokaryotic pantothenate kinase family.

It is found in the cytoplasm. The catalysed reaction is (R)-pantothenate + ATP = (R)-4'-phosphopantothenate + ADP + H(+). The protein operates within cofactor biosynthesis; coenzyme A biosynthesis; CoA from (R)-pantothenate: step 1/5. This is Pantothenate kinase from Shewanella sp. (strain MR-4).